A 412-amino-acid chain; its full sequence is 4-hydroxyphenylpyruvate dioxygenase (412 aa).

VOC domains lie at 31-179 and 209-369; these read GYDH…LISR and RIDH…LFTK. The Fe cation site is built by His212, His295, and Glu380.

The protein belongs to the 4HPPD family. The cofactor is Fe cation.

The enzyme catalyses 3-(4-hydroxyphenyl)pyruvate + O2 = homogentisate + CO2. The protein operates within amino-acid degradation; L-phenylalanine degradation; acetoacetate and fumarate from L-phenylalanine: step 3/6. The chain is 4-hydroxyphenylpyruvate dioxygenase from Neurospora crassa (strain ATCC 24698 / 74-OR23-1A / CBS 708.71 / DSM 1257 / FGSC 987).